A 381-amino-acid chain; its full sequence is Dynactin subunit 2 (381 aa).

The segment at 15–39 is disordered; it reads DQPDVYETPDAPESETSDFYDEEPA. Residues 24-39 show a composition bias toward acidic residues; it reads DAPESETSDFYDEEPA. 2 coiled-coil regions span residues 100–216 and 350–381; these read QKCL…AVGA and GVQE…EKVK.

The protein belongs to the dynactin subunit 2 family. As to quaternary structure, subunit of dynactin, a multiprotein complex associated with dynein.

The protein resides in the cytoplasm. It localises to the cytoskeleton. Its subcellular location is the membrane. Functionally, modulates cytoplasmic dynein binding to an organelle, and plays a role in prometaphase chromosome alignment and spindle organization during mitosis. This is Dynactin subunit 2 from Aedes aegypti (Yellowfever mosquito).